The following is a 561-amino-acid chain: Putative transport protein YbjL (561 aa).

5 consecutive transmembrane segments (helical) span residues Leu-8–Gly-28, Leu-32–Gln-52, Phe-66–Phe-86, Met-94–Phe-114, and Asn-158–Ala-178. 2 RCK C-terminal domains span residues Arg-200–Asn-288 and Val-292–Phe-373. The next 5 helical transmembrane spans lie at Leu-383–Phe-403, Phe-406–Leu-426, Phe-447–Gly-467, Met-475–Ala-495, and Ala-540–Leu-560.

This sequence belongs to the AAE transporter (TC 2.A.81) family. YbjL subfamily.

The protein resides in the cell membrane. In Salmonella gallinarum (strain 287/91 / NCTC 13346), this protein is Putative transport protein YbjL.